The following is a 348-amino-acid chain: Elongation factor Ts (348 aa).

The tract at residues 82–85 (TDFV) is involved in Mg(2+) ion dislocation from EF-Tu.

It belongs to the EF-Ts family.

Its subcellular location is the cytoplasm. In terms of biological role, associates with the EF-Tu.GDP complex and induces the exchange of GDP to GTP. It remains bound to the aminoacyl-tRNA.EF-Tu.GTP complex up to the GTP hydrolysis stage on the ribosome. The protein is Elongation factor Ts of Aliarcobacter butzleri (strain RM4018) (Arcobacter butzleri).